Reading from the N-terminus, the 360-residue chain is 3-dehydroquinate synthase (360 aa).

NAD(+)-binding positions include 106–110, 130–131, lysine 143, and lysine 152; these read GVIGD and TS. Zn(2+) contacts are provided by glutamate 185, histidine 246, and histidine 262.

It belongs to the sugar phosphate cyclases superfamily. Dehydroquinate synthase family. Co(2+) is required as a cofactor. The cofactor is Zn(2+). NAD(+) serves as cofactor.

It is found in the cytoplasm. The catalysed reaction is 7-phospho-2-dehydro-3-deoxy-D-arabino-heptonate = 3-dehydroquinate + phosphate. It functions in the pathway metabolic intermediate biosynthesis; chorismate biosynthesis; chorismate from D-erythrose 4-phosphate and phosphoenolpyruvate: step 2/7. Catalyzes the conversion of 3-deoxy-D-arabino-heptulosonate 7-phosphate (DAHP) to dehydroquinate (DHQ). The chain is 3-dehydroquinate synthase from Leuconostoc citreum (strain KM20).